Here is a 142-residue protein sequence, read N- to C-terminus: Putative transmembrane protein INAFM1 (142 aa).

Over residues 1-19 (MRGTSCVGGGAESPGGAGL) the composition is skewed to gly residues. The interval 1–22 (MRGTSCVGGGAESPGGAGLSEG) is disordered. The chain crosses the membrane as a helical span at residues 36–56 (YFLCVSLAAVLLAVYYGLIWV). Disordered stretches follow at residues 61–83 (PAAP…PGVP) and 99–142 (VPGG…RRPG). A compositionally biased stretch (pro residues) spans 64-83 (PAGPQPSAPSPPCAARPGVP). Positions 99-111 (VPGGPRPQLQLPL) are enriched in low complexity. Over residues 117–142 (YSDPDRRPSRQTPRETPEAAEGRRPG) the composition is skewed to basic and acidic residues.

The protein resides in the membrane. The protein is Putative transmembrane protein INAFM1 of Homo sapiens (Human).